A 141-amino-acid polypeptide reads, in one-letter code: Phosphoribosyl-AMP cyclohydrolase (141 aa).

Aspartate 91 is a binding site for Mg(2+). Zn(2+) is bound at residue cysteine 92. Aspartate 93 and aspartate 95 together coordinate Mg(2+). 2 residues coordinate Zn(2+): cysteine 110 and cysteine 117.

The protein belongs to the PRA-CH family. As to quaternary structure, homodimer. Requires Mg(2+) as cofactor. The cofactor is Zn(2+).

Its subcellular location is the cytoplasm. The enzyme catalyses 1-(5-phospho-beta-D-ribosyl)-5'-AMP + H2O = 1-(5-phospho-beta-D-ribosyl)-5-[(5-phospho-beta-D-ribosylamino)methylideneamino]imidazole-4-carboxamide. Its pathway is amino-acid biosynthesis; L-histidine biosynthesis; L-histidine from 5-phospho-alpha-D-ribose 1-diphosphate: step 3/9. Catalyzes the hydrolysis of the adenine ring of phosphoribosyl-AMP. The protein is Phosphoribosyl-AMP cyclohydrolase of Brucella anthropi (strain ATCC 49188 / DSM 6882 / CCUG 24695 / JCM 21032 / LMG 3331 / NBRC 15819 / NCTC 12168 / Alc 37) (Ochrobactrum anthropi).